Here is a 215-residue protein sequence, read N- to C-terminus: Guanylate kinase (215 aa).

In terms of domain architecture, Guanylate kinase-like spans 11 to 189; the sequence is GNVFMVVAPS…ALTELVQIIS (179 aa). 18 to 25 contacts ATP; the sequence is APSGAGKS.

This sequence belongs to the guanylate kinase family.

Its subcellular location is the cytoplasm. The catalysed reaction is GMP + ATP = GDP + ADP. Essential for recycling GMP and indirectly, cGMP. This chain is Guanylate kinase, found in Bordetella bronchiseptica (strain ATCC BAA-588 / NCTC 13252 / RB50) (Alcaligenes bronchisepticus).